The sequence spans 251 residues: MLAKRIIPCLDVRDGRVVKGINFEGLRDAGSILEQARFYNNELADELVFLDISASLESRRTTLEEVMKVSEEVFIPLTVGGGISSVERAREVFLHGADKVSVNTAAVNDPYLISRIAEKYGSQAVVVAIDIKKVGNHYMVHTHSGKQITQYEALEWALKVQELGAGEILLTSMDRDGTKEGYENNSLRMISTAVHIPVIASGGAGNLEHLYDGFSKGCADAALAASIFHFRHYSIRQAKEYLHKRGVAVRF.

Active-site residues include Asp-11 and Asp-130.

It belongs to the HisA/HisF family. Heterodimer of HisH and HisF.

It localises to the cytoplasm. It catalyses the reaction 5-[(5-phospho-1-deoxy-D-ribulos-1-ylimino)methylamino]-1-(5-phospho-beta-D-ribosyl)imidazole-4-carboxamide + L-glutamine = D-erythro-1-(imidazol-4-yl)glycerol 3-phosphate + 5-amino-1-(5-phospho-beta-D-ribosyl)imidazole-4-carboxamide + L-glutamate + H(+). The protein operates within amino-acid biosynthesis; L-histidine biosynthesis; L-histidine from 5-phospho-alpha-D-ribose 1-diphosphate: step 5/9. IGPS catalyzes the conversion of PRFAR and glutamine to IGP, AICAR and glutamate. The HisF subunit catalyzes the cyclization activity that produces IGP and AICAR from PRFAR using the ammonia provided by the HisH subunit. The polypeptide is Imidazole glycerol phosphate synthase subunit HisF (Chlorobium chlorochromatii (strain CaD3)).